Reading from the N-terminus, the 269-residue chain is Putative pyruvate, phosphate dikinase regulatory protein (269 aa).

ADP is bound at residue 147 to 154 (GVSRTSKT).

This sequence belongs to the pyruvate, phosphate/water dikinase regulatory protein family. PDRP subfamily.

It catalyses the reaction N(tele)-phospho-L-histidyl/L-threonyl-[pyruvate, phosphate dikinase] + ADP = N(tele)-phospho-L-histidyl/O-phospho-L-threonyl-[pyruvate, phosphate dikinase] + AMP + H(+). The catalysed reaction is N(tele)-phospho-L-histidyl/O-phospho-L-threonyl-[pyruvate, phosphate dikinase] + phosphate + H(+) = N(tele)-phospho-L-histidyl/L-threonyl-[pyruvate, phosphate dikinase] + diphosphate. Functionally, bifunctional serine/threonine kinase and phosphorylase involved in the regulation of the pyruvate, phosphate dikinase (PPDK) by catalyzing its phosphorylation/dephosphorylation. The protein is Putative pyruvate, phosphate dikinase regulatory protein of Geotalea daltonii (strain DSM 22248 / JCM 15807 / FRC-32) (Geobacter daltonii).